The sequence spans 70 residues: Small ribosomal subunit protein bS21 (70 aa).

The protein belongs to the bacterial ribosomal protein bS21 family.

In Bordetella avium (strain 197N), this protein is Small ribosomal subunit protein bS21.